The chain runs to 157 residues: Small ribosomal subunit protein uS7 (157 aa).

Belongs to the universal ribosomal protein uS7 family. Part of the 30S ribosomal subunit. Contacts proteins S9 and S11.

Its function is as follows. One of the primary rRNA binding proteins, it binds directly to 16S rRNA where it nucleates assembly of the head domain of the 30S subunit. Is located at the subunit interface close to the decoding center, probably blocks exit of the E-site tRNA. This is Small ribosomal subunit protein uS7 from Caulobacter vibrioides (strain ATCC 19089 / CIP 103742 / CB 15) (Caulobacter crescentus).